Consider the following 488-residue polypeptide: Capsid protein (488 aa).

Positions 79–142 are disordered; it reads ETSEDESDSG…TQPKTIPGQK (64 aa). Positions 80-93 are enriched in acidic residues; it reads TSEDESDSGEEPEF. The segment covering 94 to 130 has biased composition (basic and acidic residues); sequence EQVRMDRTGGTEIPKKEDGAEPSRYNERKRKTTEDRY. A Nuclear localization signal motif is present at residues 121-124; that stretch reads RKRK. A CCHC-type; degenerate zinc finger spans residues 411-428; the sequence is CRCWISNIEGHYANECPN. The disordered stretch occupies residues 464 to 488; it reads YKEEEEETSTEESDGSSTSEDSDSD. Residues 465-488 are compositionally biased toward acidic residues; the sequence is KEEEEETSTEESDGSSTSEDSDSD.

The protein belongs to the caulimoviridae capsid protein family. As to quaternary structure, interacts (via nuclear localization signal) with host importin alpha.

Its subcellular location is the virion. It localises to the host nucleus. Its function is as follows. Self assembles to form an icosahedral capsid, about 50 nm in diameter, nm, composed of 420 subunits of the viral capsid protein. The capsid encapsulates the genomic dsDNA. Following virus entry into host cell, provides nuclear import of the viral genome. Virus particles do not enter the nucleus, but dock at the nuclear membrane through the interaction with host importins. The sequence is that of Capsid protein from Arabidopsis thaliana (Mouse-ear cress).